We begin with the raw amino-acid sequence, 254 residues long: Pyruvate aldolase (254 aa).

The Proton acceptor role is filled by His48. A divalent metal cation-binding residues include Glu151 and Asp177.

The protein belongs to the HpcH/HpaI aldolase family. The cofactor is a divalent metal cation.

It catalyses the reaction D-glyceraldehyde + pyruvate = 2-dehydro-3-deoxy-L-galactonate. Its function is as follows. Aldolase which can catalyze in vitro the aldolisation reaction between pyruvate (PA) and D-glyceraldehyde (D-GA) to form 2-dehydro-3-deoxy-L-galactonate. The sequence is that of Pyruvate aldolase from Rhizobium etli (strain ATCC 51251 / DSM 11541 / JCM 21823 / NBRC 15573 / CFN 42).